Reading from the N-terminus, the 438-residue chain is MFLPQEFIRRKRDGQPLDRDGMAAFVRGVTDGSVTEGQVAAFAMAVYFNDLSTDERVALTLAQRDSGDVLDWRALGLGGPVIDKHSTGGVGDVVSLMLGPMVAACGGYVPMISGRGLGHTGGTLDKLSAIPGYDVMPDTDAFRRTVREVGVAIIGQTARLAPADKRIYAIRDVTATVESVAMITASILSKKLAAGLDGLVMDVKVGSGAFMPTAEKSAELARSIVDVGNGAGMKTTAILTDMNQSLAPCAGNALEVACAIDYLTGKSRPARLHDVTMALSAELLVTGGLARDAAHAREKLQQALDSGAAAERFARMVVALGGPADLLDAPARHLARAAVIVPVPAPASGVVQRVDCRALGLAVVALGGGRTRAEDAIDVSVGLSALAEIGQRIESGEPLGFVHARDEAAAAHAADAIRRGYVLGDTGEAPPTLYRQIG.

This sequence belongs to the thymidine/pyrimidine-nucleoside phosphorylase family. In terms of assembly, homodimer.

The enzyme catalyses thymidine + phosphate = 2-deoxy-alpha-D-ribose 1-phosphate + thymine. The protein operates within pyrimidine metabolism; dTMP biosynthesis via salvage pathway; dTMP from thymine: step 1/2. Functionally, the enzymes which catalyze the reversible phosphorolysis of pyrimidine nucleosides are involved in the degradation of these compounds and in their utilization as carbon and energy sources, or in the rescue of pyrimidine bases for nucleotide synthesis. The protein is Thymidine phosphorylase of Burkholderia orbicola (strain MC0-3).